The chain runs to 158 residues: uncharacterized protein (158 aa).

A compositionally biased stretch (polar residues) spans 1–21 (MPHTGSQHTLQATPKTAQHTG). Disordered regions lie at residues 1-89 (MPHT…RVEG) and 107-158 (EEEK…DAKT). Composition is skewed to basic and acidic residues over residues 51–68 (HTEGCHTQKTRMSADKAG) and 107–127 (EEEKASGEARGEDVGSSRESR). Residues 128–137 (QGTAHKSTCM) are compositionally biased toward polar residues. Over residues 149 to 158 (EIGKVEDAKT) the composition is skewed to basic and acidic residues.

This is an uncharacterized protein from Encephalitozoon cuniculi (strain GB-M1) (Microsporidian parasite).